The chain runs to 400 residues: Chaperone protein DnaJ (400 aa).

Residues 4–69 (DYYETLGVTR…DKRRRYDQFG (66 aa)) enclose the J domain. Residues 156 to 237 (GVEKTLKVKR…CYGEGIKLGE (82 aa)) form a CR-type zinc finger. Positions 169, 172, 185, 188, 211, 214, 225, and 228 each coordinate Zn(2+). 4 CXXCXGXG motif repeats span residues 169-176 (CEVCNGTG), 185-192 (CQTCHGSG), 211-218 (CPTCGGEG), and 225-232 (CTACYGEG).

This sequence belongs to the DnaJ family. Homodimer. Requires Zn(2+) as cofactor.

The protein resides in the cytoplasm. Its function is as follows. Participates actively in the response to hyperosmotic and heat shock by preventing the aggregation of stress-denatured proteins and by disaggregating proteins, also in an autonomous, DnaK-independent fashion. Unfolded proteins bind initially to DnaJ; upon interaction with the DnaJ-bound protein, DnaK hydrolyzes its bound ATP, resulting in the formation of a stable complex. GrpE releases ADP from DnaK; ATP binding to DnaK triggers the release of the substrate protein, thus completing the reaction cycle. Several rounds of ATP-dependent interactions between DnaJ, DnaK and GrpE are required for fully efficient folding. Also involved, together with DnaK and GrpE, in the DNA replication of plasmids through activation of initiation proteins. This chain is Chaperone protein DnaJ, found in Chlorobium chlorochromatii (strain CaD3).